The sequence spans 354 residues: Holliday junction branch migration complex subunit RuvB (354 aa).

Residues 4–190 (TDKLAAERII…FGIVARLEFY (187 aa)) form a large ATPase domain (RuvB-L) region. Residues Leu-29, Arg-30, Gly-71, Lys-74, Thr-75, Thr-76, 137-139 (EDY), Arg-180, Tyr-190, and Arg-227 each bind ATP. Residue Thr-75 coordinates Mg(2+). The small ATPAse domain (RuvB-S) stretch occupies residues 191-261 (NAEELARIVT…VADAALKMLD (71 aa)). The segment at 264 to 354 (AVGFDLMDRK…LPGLWDSAAT (91 aa)) is head domain (RuvB-H). 3 residues coordinate DNA: Arg-300, Arg-319, and Arg-324.

This sequence belongs to the RuvB family. Homohexamer. Forms an RuvA(8)-RuvB(12)-Holliday junction (HJ) complex. HJ DNA is sandwiched between 2 RuvA tetramers; dsDNA enters through RuvA and exits via RuvB. An RuvB hexamer assembles on each DNA strand where it exits the tetramer. Each RuvB hexamer is contacted by two RuvA subunits (via domain III) on 2 adjacent RuvB subunits; this complex drives branch migration. In the full resolvosome a probable DNA-RuvA(4)-RuvB(12)-RuvC(2) complex forms which resolves the HJ.

It localises to the cytoplasm. The catalysed reaction is ATP + H2O = ADP + phosphate + H(+). In terms of biological role, the RuvA-RuvB-RuvC complex processes Holliday junction (HJ) DNA during genetic recombination and DNA repair, while the RuvA-RuvB complex plays an important role in the rescue of blocked DNA replication forks via replication fork reversal (RFR). RuvA specifically binds to HJ cruciform DNA, conferring on it an open structure. The RuvB hexamer acts as an ATP-dependent pump, pulling dsDNA into and through the RuvAB complex. RuvB forms 2 homohexamers on either side of HJ DNA bound by 1 or 2 RuvA tetramers; 4 subunits per hexamer contact DNA at a time. Coordinated motions by a converter formed by DNA-disengaged RuvB subunits stimulates ATP hydrolysis and nucleotide exchange. Immobilization of the converter enables RuvB to convert the ATP-contained energy into a lever motion, pulling 2 nucleotides of DNA out of the RuvA tetramer per ATP hydrolyzed, thus driving DNA branch migration. The RuvB motors rotate together with the DNA substrate, which together with the progressing nucleotide cycle form the mechanistic basis for DNA recombination by continuous HJ branch migration. Branch migration allows RuvC to scan DNA until it finds its consensus sequence, where it cleaves and resolves cruciform DNA. This is Holliday junction branch migration complex subunit RuvB from Paraburkholderia phytofirmans (strain DSM 17436 / LMG 22146 / PsJN) (Burkholderia phytofirmans).